A 261-amino-acid chain; its full sequence is Cytochrome c oxidase subunit 3 (261 aa).

Residues 1-15 (MTKQMHAFHMVNPSP) are Mitochondrial matrix-facing. The helical transmembrane segment at 16–34 (WPLTGAASAFMLTSGLAMW) threads the bilayer. Over 35–40 (FHKHSN) the chain is Mitochondrial intermembrane. Residues 41–66 (TLIFLSMILMLLTMYQWWRDITREGT) form a helical membrane-spanning segment. Residues 67-72 (FQGHHT) lie on the Mitochondrial matrix side of the membrane. The chain crosses the membrane as a helical span at residues 73 to 105 (SLVQKSLRYGMILFIVSEVCFFFGFFWTFYHSS). Residues 106-128 (LSPSPDLGMMWPPKGVIPLDPFE) are Mitochondrial intermembrane-facing. The helical transmembrane segment at 129–152 (IPLLNTAILLGSGVSVTWAHHSLM) threads the bilayer. Residues 153-155 (EKT) are Mitochondrial matrix-facing. A helical transmembrane segment spans residues 156-183 (HKDMVISLSITIILGIYFTLLQGMEYFN). The Mitochondrial intermembrane segment spans residues 184–190 (STFNISD). A helical membrane pass occupies residues 191-223 (NAYGSTFFVATGFHGGHVIIGTLFLTVCLLRQL). At 224 to 232 (MFHFTSSHH) the chain is on the mitochondrial matrix side. Residues 233-256 (FGFEAAAWYWHFVDVVWLFLFISI) form a helical membrane-spanning segment. The Mitochondrial intermembrane portion of the chain corresponds to 257–261 (YWWGS).

Belongs to the cytochrome c oxidase subunit 3 family. Component of the cytochrome c oxidase (complex IV, CIV), a multisubunit enzyme composed of 14 subunits. The complex is composed of a catalytic core of 3 subunits MT-CO1, MT-CO2 and MT-CO3, encoded in the mitochondrial DNA, and 11 supernumerary subunits COX4I, COX5A, COX5B, COX6A, COX6B, COX6C, COX7A, COX7B, COX7C, COX8 and NDUFA4, which are encoded in the nuclear genome. The complex exists as a monomer or a dimer and forms supercomplexes (SCs) in the inner mitochondrial membrane with NADH-ubiquinone oxidoreductase (complex I, CI) and ubiquinol-cytochrome c oxidoreductase (cytochrome b-c1 complex, complex III, CIII), resulting in different assemblies (supercomplex SCI(1)III(2)IV(1) and megacomplex MCI(2)III(2)IV(2)).

The protein resides in the mitochondrion inner membrane. The enzyme catalyses 4 Fe(II)-[cytochrome c] + O2 + 8 H(+)(in) = 4 Fe(III)-[cytochrome c] + 2 H2O + 4 H(+)(out). Its function is as follows. Component of the cytochrome c oxidase, the last enzyme in the mitochondrial electron transport chain which drives oxidative phosphorylation. The respiratory chain contains 3 multisubunit complexes succinate dehydrogenase (complex II, CII), ubiquinol-cytochrome c oxidoreductase (cytochrome b-c1 complex, complex III, CIII) and cytochrome c oxidase (complex IV, CIV), that cooperate to transfer electrons derived from NADH and succinate to molecular oxygen, creating an electrochemical gradient over the inner membrane that drives transmembrane transport and the ATP synthase. Cytochrome c oxidase is the component of the respiratory chain that catalyzes the reduction of oxygen to water. Electrons originating from reduced cytochrome c in the intermembrane space (IMS) are transferred via the dinuclear copper A center (CU(A)) of subunit 2 and heme A of subunit 1 to the active site in subunit 1, a binuclear center (BNC) formed by heme A3 and copper B (CU(B)). The BNC reduces molecular oxygen to 2 water molecules using 4 electrons from cytochrome c in the IMS and 4 protons from the mitochondrial matrix. The chain is Cytochrome c oxidase subunit 3 (MT-CO3) from Myxine glutinosa (Atlantic hagfish).